Here is a 327-residue protein sequence, read N- to C-terminus: Tetraacyldisaccharide 4'-kinase (327 aa).

Residue phenylalanine 56–threonine 63 coordinates ATP.

It belongs to the LpxK family.

The catalysed reaction is a lipid A disaccharide + ATP = a lipid IVA + ADP + H(+). The protein operates within glycolipid biosynthesis; lipid IV(A) biosynthesis; lipid IV(A) from (3R)-3-hydroxytetradecanoyl-[acyl-carrier-protein] and UDP-N-acetyl-alpha-D-glucosamine: step 6/6. Transfers the gamma-phosphate of ATP to the 4'-position of a tetraacyldisaccharide 1-phosphate intermediate (termed DS-1-P) to form tetraacyldisaccharide 1,4'-bis-phosphate (lipid IVA). The polypeptide is Tetraacyldisaccharide 4'-kinase (Halorhodospira halophila (strain DSM 244 / SL1) (Ectothiorhodospira halophila (strain DSM 244 / SL1))).